Consider the following 625-residue polypeptide: Endoglucanase D (625 aa).

An N-terminal signal peptide occupies residues 1 to 17 (SLTGVFPSGLIETKVSA). The active-site Nucleophile is the Asp177. Catalysis depends on residues His492 and Asp522. Glu531 (proton donor) is an active-site residue. One can recognise a Dockerin domain in the interval 555 to 625 (NEVLYGDVND…LIRVIEKLPI (71 aa)).

This sequence belongs to the glycosyl hydrolase 9 (cellulase E) family. It depends on Ca(2+) as a cofactor.

It carries out the reaction Endohydrolysis of (1-&gt;4)-beta-D-glucosidic linkages in cellulose, lichenin and cereal beta-D-glucans.. In terms of biological role, this enzyme catalyzes the endohydrolysis of 1,4-beta-glucosidic linkages in cellulose, lichenin and cereal beta-D-glucans. This Acetivibrio thermocellus (Hungateiclostridium thermocellum) protein is Endoglucanase D (celD).